The following is a 123-amino-acid chain: CD59A glycoprotein (123 aa).

The N-terminal stretch at 1–23 is a signal peptide; the sequence is MRAQRGLILLLLLLAVFCSTAVS. Residues 24–96 enclose the UPAR/Ly6 domain; it reads LTCYHCFQPV…CCQFNLCNKS (73 aa). 5 disulfides stabilise this stretch: C26–C50, C29–C37, C43–C63, C69–C87, and C88–C93. N40 is a glycosylation site (N-linked (GlcNAc...) asparagine). An N-linked (GlcNAc...) asparagine glycan is attached at N94. The propeptide at 97–123 is removed in mature form; the sequence is DGSLGKTPLLGTSVLVAILNLCFLSHL.

Interacts with T-cell surface antigen CD2. N- and O-glycosylated. Expressed in all tissues examined (liver, kidney, spleen, thymus, brain and heart). Low levels in thymus. Also expressed in mononuclear cells, erythrocytes and platelets. Barely detected in neutrophils.

Its subcellular location is the cell membrane. It localises to the secreted. Its function is as follows. Potent inhibitor of the complement membrane attack complex (MAC) action, which protects self-cells from damage during complement activation. Acts by binding to the beta-haipins of C8 (C8A and C8B) components of the assembling MAC, forming an intermolecular beta-sheet that prevents incorporation of the multiple copies of C9 required for complete formation of the osmolytic pore. The sequence is that of CD59A glycoprotein from Mus musculus (Mouse).